The following is a 349-amino-acid chain: Ion-translocating oxidoreductase complex subunit D (349 aa).

Transmembrane regions (helical) follow at residues 20–42, 77–99, and 124–144; these read VMQR…FGWG, SAML…WMIV, and AMAA…TWIA. Threonine 185 bears the FMN phosphoryl threonine mark. 5 helical membrane-spanning segments follow: residues 212 to 232, 239 to 259, 265 to 285, 291 to 311, and 315 to 335; these read STGV…LVLL, WHIS…GFLL, ASPL…FIAT, ATSP…VYII, and GGYP…APFI.

Belongs to the NqrB/RnfD family. The complex is composed of six subunits: RnfA, RnfB, RnfC, RnfD, RnfE and RnfG. The cofactor is FMN.

It is found in the cell inner membrane. Part of a membrane-bound complex that couples electron transfer with translocation of ions across the membrane. The polypeptide is Ion-translocating oxidoreductase complex subunit D (Shewanella baltica (strain OS185)).